A 410-amino-acid chain; its full sequence is MSRSLSIIWLFGLISGFNIMITGNTLNYWLAKENIALQTIGLLSLITLPYSINFLFAPIFDSLKIKYLDKIFGHRLSWICLTSIALVFFVYILSFLNPFDNLLLFASISLIISFFSSMQDTILSAFRTEIVNKESLGFASGIYIFGYRFGMLLANSGAIYLSIYLTFNEIYKIFAILIFIYLILLIVGVKYCRFDQNNDIEQTTNNNDDIFAFIKNILKPIGSISFIILILIFLILYRLPDNFINVMINPFLLHLNYDAFEIASVGKFWGVMGAIVGGLLGGFIMKKKNILDSILLFGIIHALAHILFIILKIHGKNSTLLFITIGAESITGGMTMTAYIAFISSLCQGKFRATQYSFFSSMMGISRSIFPIISGYIVVNFGWQNFFLFTTIITIPSLLVLLKIKNKLQQ.

12 helical membrane-spanning segments follow: residues 5-25, 40-60, 76-96, 98-118, 141-161, 169-189, 217-237, 265-285, 290-310, 320-340, 356-378, and 383-402; these read LSII…TGNT, IGLL…APIF, LSWI…LSFL, PFDN…FSSM, GIYI…AIYL, EIYK…IVGV, ILKP…LILY, VGKF…GFIM, ILDS…LFII, LLFI…TAYI, YSFF…GYIV, and WQNF…LVLL.

This sequence belongs to the major facilitator superfamily.

It is found in the cell inner membrane. The sequence is that of Putative transporter AmpG 1 (ampG1) from Rickettsia bellii (strain RML369-C).